Consider the following 617-residue polypeptide: E3 ubiquitin-protein ligase synoviolin (617 aa).

At 1–4 (MFRT) the chain is on the cytoplasmic side. Positions 1–84 (MFRTAVMMAA…EHLLERSWYA (84 aa)) are necessary and sufficient for SEL1L interaction. The segment at 1 to 251 (MFRTAVMMAA…LFAIRPMYLA (251 aa)) is involved in FAM8A1 interaction. Residues 5 to 25 (AVMMAASLALTGAVVAHAYYL) form a helical membrane-spanning segment. Topologically, residues 26 to 41 (KHQFYPTVVYLTKSSP) are lumenal. The chain crosses the membrane as a helical span at residues 42–62 (SMAVLYIQAFVLVFLLGKVMG). At 63–98 (KVFFGQLRAAEMEHLLERSWYAVTETCLAFTVFRDD) the chain is on the cytoplasmic side. The chain crosses the membrane as a helical span at residues 99 to 119 (FSPRFVALFTLLLFLKCFHWL). Over 120 to 140 (AEDRVDFMERSPNISWLFHCR) the chain is Lumenal. The helical transmembrane segment at 141-161 (IVSLMFLLGILDFLFVSHAYH) threads the bilayer. The Cytoplasmic portion of the chain corresponds to 162 to 169 (SILTRGAS). Residues 170-190 (VQLVFGFEYAILMTMVLTIFI) traverse the membrane as a helical segment. At 191–224 (KYVLHSVDLQSENPWDNKAVYMLYTELFTGFIKV) the chain is on the lumenal side. A helical membrane pass occupies residues 225-245 (LLYMAFMTIMIKVHTFPLFAI). The segment at 236–270 (KVHTFPLFAIRPMYLAMRQFKKAVTDAIMSRRAIR) is interaction with p53/TP53. Residues 246-617 (RPMYLAMRQF…LQKLESPVAH (372 aa)) lie on the Cytoplasmic side of the membrane. Residues cysteine 291, cysteine 294, cysteine 307, histidine 309, histidine 312, cysteine 315, cysteine 326, and cysteine 329 each contribute to the Zn(2+) site. Residues 291 to 330 (CIICREEMVTGAKRLPCNHIFHTSCLRSWFQRQQTCPTCR) form an RING-type; atypical zinc finger. Disordered stretches follow at residues 337-375 (SLPA…GLLP), 393-453 (PVPP…PAPG), and 535-617 (RPAT…PVAH). The segment covering 341 to 375 (QSPPPPEPADQGPPPAPHPPPLLPQPPNFPQGLLP) has biased composition (pro residues). Over residues 417–451 (PSGAATTTAAGTSATAASATASGPGSGSAPEAGPA) the composition is skewed to low complexity. Positions 480–535 (GFAGLTPEELRALEGHERQHLEARLQSLRNIHTLLDAAMLQINQYLTVLASLGPPR) are HAF-H domain; necessary to form higher-order Hrd1 complexes. Over residues 537–569 (ATSVNSTEETATTVVAAASSTSIPSSEATTPTP) the composition is skewed to low complexity. Over residues 591 to 600 (EMPEDGEPDA) the composition is skewed to acidic residues. Serine 613 carries the phosphoserine modification.

It belongs to the HRD1 family. As to quaternary structure, homodimer. Interacts with p53/TP53. Interacts with HTT. Component of the HRD1 complex, which comprises at least SYNV1/HRD1, DERL1/2, FAM8A1, HERPUD1/HERP, OS9, SEL1L and UBE2J1. FAM8A1 is stabilized by interaction with SYNV1, which prevents its proteasomal degradation. OS9 and UBE2J1 recruitment to the complex may be mediated by SEL1L. SYNV1 assembles with SEL1L and FAM8A1 through its transmembrane domains, but interaction with its cytoplasmic domain is required to confer stability to FAM8A1 and enhance recruitment of HERPUD1. The HRD1 complex also associates with VIMP and may transfer misfolded proteins from the endoplasmic reticulum to VCP. May form a complex with ERLEC1, HSPA5, OS9 and SEL1L. Interacts with VCP. Interacts with UBXN6. Interacts with BAG6. Interacts with NFE2L1. Interacts (via N-terminus) with components of the pre-B cell receptor, including IGLL1 and VPREB1. Interacts with CREB3L3; this interaction leads to CREB3L3 ubiquitination and proteasomal degradation. In terms of processing, not N-glycosylated. Auto-ubiquitinated. Deubiquitinated by USP19. As to expression, ubiquitously expressed, with highest levels in liver and kidney (at protein level). Up-regulated in synovial tissues from patients with rheumatoid arthritis (at protein level).

It is found in the endoplasmic reticulum membrane. The catalysed reaction is S-ubiquitinyl-[E2 ubiquitin-conjugating enzyme]-L-cysteine + [acceptor protein]-L-lysine = [E2 ubiquitin-conjugating enzyme]-L-cysteine + N(6)-ubiquitinyl-[acceptor protein]-L-lysine.. It participates in protein modification; protein ubiquitination. Functionally, E3 ubiquitin-protein ligase which accepts ubiquitin specifically from endoplasmic reticulum-associated UBC7 E2 ligase and transfers it to substrates, promoting their degradation. Component of the endoplasmic reticulum quality control (ERQC) system also called ER-associated degradation (ERAD) involved in ubiquitin-dependent degradation of misfolded endoplasmic reticulum proteins. Also promotes the degradation of normal but naturally short-lived proteins such as SGK. Protects cells from ER stress-induced apoptosis. Protects neurons from apoptosis induced by polyglutamine-expanded huntingtin (HTT) or unfolded GPR37 by promoting their degradation. Sequesters p53/TP53 in the cytoplasm and promotes its degradation, thereby negatively regulating its biological function in transcription, cell cycle regulation and apoptosis. Mediates the ubiquitination and subsequent degradation of cytoplasmic NFE2L1. During the early stage of B cell development, required for degradation of the pre-B cell receptor (pre-BCR) complex, hence supporting further differentiation into mature B cells. This Homo sapiens (Human) protein is E3 ubiquitin-protein ligase synoviolin.